The primary structure comprises 129 residues: Lysozyme C (129 aa).

One can recognise a C-type lysozyme domain in the interval 1–129 (KVYGRCELAA…VHAWIRGCRL (129 aa)). Intrachain disulfides connect C6-C127, C30-C115, C64-C80, and C76-C94. Catalysis depends on residues E35 and D52.

The protein belongs to the glycosyl hydrolase 22 family. In terms of assembly, monomer.

It localises to the secreted. It catalyses the reaction Hydrolysis of (1-&gt;4)-beta-linkages between N-acetylmuramic acid and N-acetyl-D-glucosamine residues in a peptidoglycan and between N-acetyl-D-glucosamine residues in chitodextrins.. Lysozymes have primarily a bacteriolytic function; those in tissues and body fluids are associated with the monocyte-macrophage system and enhance the activity of immunoagents. This is Lysozyme C (LYZ) from Pavo cristatus (Indian peafowl).